We begin with the raw amino-acid sequence, 348 residues long: Aldose 1-epimerase (348 aa).

R80 contacts substrate. The Proton donor role is filled by H180. D243 lines the substrate pocket. The active-site Proton acceptor is E311.

Belongs to the aldose epimerase family.

The catalysed reaction is alpha-D-glucose = beta-D-glucose. It participates in carbohydrate metabolism; hexose metabolism. Its function is as follows. Mutarotase converts alpha-aldose to the beta-anomer. It is active on D-glucose, L-arabinose, D-xylose, D-galactose, maltose and lactose. This chain is Aldose 1-epimerase (galM), found in Streptococcus thermophilus.